Here is a 494-residue protein sequence, read N- to C-terminus: MTTDPDPPFVSIWDNVVTELNGAGEVGNGSLTPQQRAWLKLVKPLVITEGFALLSVPTPFVQNEIERHLREPIVAALSRQLGQRVELGVRIADPVSDESDSGSVASPAPVAAADPDDDVVDDDLAARASAEESWPSYFTNRANRAAEDDATSVNLNRRYTFDTFVIGASNRFAHAASLAIAEAPARAYNPLFIWGESGLGKTHLLHAAGNYAQRLFPGMRVKYVSTEEFTNDFINSLRDDRRASFKRTYRDIDVLLVDDIQFIEGKDGIQEEFFHTFNTLHNANKQIVISSDRPPKQLATLEDRLRTRFEWGLITDVQPPELETRIAILRKKAQMDRLDVPGDVLELIASRIERNIRELEGALIRVTAFASLNKTPIDKSLAEIVLRDLISDSSTMQISTAAIMAATAEYFETSVEELRGPGKTRALAQSRQIAMYLCRELTDLSLPKIGQAFGRDHTTVMYAEKKIRAEMAERREVFDHVKELTTRIRQRAKR.

Positions 1-103 (MTTDPDPPFV…PVSDESDSGS (103 aa)) are domain I, interacts with DnaA modulators. The tract at residues 94–117 (PVSDESDSGSVASPAPVAAADPDD) is disordered. Low complexity predominate over residues 101-113 (SGSVASPAPVAAA). A domain II region spans residues 104–153 (VASPAPVAAADPDDDVVDDDLAARASAEESWPSYFTNRANRAAEDDATSV). The domain III, AAA+ region stretch occupies residues 154-370 (NLNRRYTFDT…GALIRVTAFA (217 aa)). ATP contacts are provided by Gly-198, Gly-200, Lys-201, and Thr-202. The interval 371-494 (SLNKTPIDKS…TTRIRQRAKR (124 aa)) is domain IV, binds dsDNA.

The protein belongs to the DnaA family. In terms of assembly, oligomerizes as a right-handed, spiral filament on DNA at oriC.

It localises to the cytoplasm. Plays an essential role in the initiation and regulation of chromosomal replication. ATP-DnaA binds to the origin of replication (oriC) to initiate formation of the DNA replication initiation complex once per cell cycle. Binds the DnaA box (a 9 base pair repeat at the origin) and separates the double-stranded (ds)DNA. Forms a right-handed helical filament on oriC DNA; dsDNA binds to the exterior of the filament while single-stranded (ss)DNA is stabiized in the filament's interior. The ATP-DnaA-oriC complex binds and stabilizes one strand of the AT-rich DNA unwinding element (DUE), permitting loading of DNA polymerase. After initiation quickly degrades to an ADP-DnaA complex that is not apt for DNA replication. Binds acidic phospholipids. This Mycolicibacterium vanbaalenii (strain DSM 7251 / JCM 13017 / BCRC 16820 / KCTC 9966 / NRRL B-24157 / PYR-1) (Mycobacterium vanbaalenii) protein is Chromosomal replication initiator protein DnaA.